A 572-amino-acid chain; its full sequence is Proline--tRNA ligase (572 aa).

This sequence belongs to the class-II aminoacyl-tRNA synthetase family. ProS type 1 subfamily. Homodimer.

The protein resides in the cytoplasm. It carries out the reaction tRNA(Pro) + L-proline + ATP = L-prolyl-tRNA(Pro) + AMP + diphosphate. In terms of biological role, catalyzes the attachment of proline to tRNA(Pro) in a two-step reaction: proline is first activated by ATP to form Pro-AMP and then transferred to the acceptor end of tRNA(Pro). As ProRS can inadvertently accommodate and process non-cognate amino acids such as alanine and cysteine, to avoid such errors it has two additional distinct editing activities against alanine. One activity is designated as 'pretransfer' editing and involves the tRNA(Pro)-independent hydrolysis of activated Ala-AMP. The other activity is designated 'posttransfer' editing and involves deacylation of mischarged Ala-tRNA(Pro). The misacylated Cys-tRNA(Pro) is not edited by ProRS. This Buchnera aphidicola subsp. Acyrthosiphon pisum (strain 5A) protein is Proline--tRNA ligase.